The following is a 316-amino-acid chain: MNITHRPVLLAEAVTALISGPLIQEKNAAKKIVVIDGTFGRGGHTQALLKSLEMSARVISFDKDLDAISVAQQIQDPRFTIVHDSFAHMDQYAQAESVDGILLDLGISSPQVDEAHRGFSFRREGPLDMRMNTDQGLTAAEWLEQAPQEEITRVIKTYGEERFAFQIAKAIVAKREEGLSPKTTTELASLVASVVRTREAGQDPATRTFQALRIFINRELEDLELGLKAALKLLKPGARLAVISFHSLEDRIVKQFFQAHAKVEIPRGLPVREKDLPQSALEIIGRVKPSDLEISENPRARSAIMRVAEKRMGAPV.

Residues 42-44 (GGH), Asp62, Phe86, Asp104, and Gln111 contribute to the S-adenosyl-L-methionine site.

Belongs to the methyltransferase superfamily. RsmH family.

Its subcellular location is the cytoplasm. The catalysed reaction is cytidine(1402) in 16S rRNA + S-adenosyl-L-methionine = N(4)-methylcytidine(1402) in 16S rRNA + S-adenosyl-L-homocysteine + H(+). Functionally, specifically methylates the N4 position of cytidine in position 1402 (C1402) of 16S rRNA. The protein is Ribosomal RNA small subunit methyltransferase H of Polynucleobacter asymbioticus (strain DSM 18221 / CIP 109841 / QLW-P1DMWA-1) (Polynucleobacter necessarius subsp. asymbioticus).